The sequence spans 158 residues: Small ribosomal subunit protein uS10m (158 aa).

This sequence belongs to the universal ribosomal protein uS10 family.

The protein resides in the mitochondrion. This chain is Small ribosomal subunit protein uS10m (mrps-10), found in Caenorhabditis briggsae.